The sequence spans 497 residues: Putative BTB/POZ domain-containing protein R738 (497 aa).

Positions 16 to 86 constitute a BTB domain; the sequence is SDCKLVLDDG…FYEKSNVINA (71 aa).

The protein belongs to the mimivirus BTB/WD family.

This chain is Putative BTB/POZ domain-containing protein R738, found in Acanthamoeba polyphaga (Amoeba).